The following is a 1050-amino-acid chain: Inositol hexakisphosphate kinase 1 (1050 aa).

4 disordered regions span residues 87 to 117, 129 to 177, 269 to 319, and 396 to 423; these read KITR…LSSS, PAIK…IQNV, RQEN…DNEH, and SDLD…NNND. Ser150 carries the phosphoserine modification. Residues 156 to 173 are compositionally biased toward polar residues; the sequence is KQQSHQPQVLHHQTSLKP. Basic and acidic residues predominate over residues 290 to 306; it reads ESIKEKPNTFEQDKEGE. The segment covering 307–316 has biased composition (acidic residues); sequence QADEEEDEGD. Ser396 carries the phosphoserine modification. Residues 402-417 are compositionally biased toward basic and acidic residues; it reads NNGKNDTSNENKDIEV. A Phosphoserine modification is found at Ser469. Residues 508-522 are compositionally biased toward low complexity; it reads NDSYFSSSSSHNSCS. Disordered stretches follow at residues 508–539 and 562–625; these read NDSY…DSGS and RKRN…PNLQ. Phosphoserine occurs at positions 537, 539, 566, 583, 589, 646, 664, and 670. A compositionally biased stretch (polar residues) spans 566 to 624; sequence SNTTTMGNHNARLGSSPSFLTQKSRASSHDASNTSMKTLGDSSSQASLQMDDSKVNPNL. Residue 772–780 participates in substrate binding; the sequence is PCALDLKMG.

This sequence belongs to the inositol phosphokinase (IPK) family.

It localises to the cytoplasm. It catalyses the reaction 1D-myo-inositol hexakisphosphate + ATP = 5-diphospho-1D-myo-inositol 1,2,3,4,6-pentakisphosphate + ADP. It carries out the reaction 1-diphospho-1D-myo-inositol 2,3,4,5,6-pentakisphosphate + ATP + H(+) = 1,5-bis(diphospho)-1D-myo-inositol 2,3,4,6-tetrakisphosphate + ADP. Functionally, converts inositol hexakisphosphate (InsP6) to diphosphoinositol pentakisphosphate (InsP7/PP-InsP5). Involved in phosphate regulation and polyphosphate accumulation. Required for resistance to salt stress, cell wall integrity, vacuole morphogenesis, and telomere maintenance. The protein is Inositol hexakisphosphate kinase 1 (KCS1) of Saccharomyces cerevisiae (strain ATCC 204508 / S288c) (Baker's yeast).